Consider the following 158-residue polypeptide: GTP-dependent dephospho-CoA kinase (158 aa).

Residues Asp35, Ile36, Val37, Asp54, Lys56, Glu109, and Asp132 each coordinate GTP.

The protein belongs to the GTP-dependent DPCK family.

The catalysed reaction is 3'-dephospho-CoA + GTP = GDP + CoA + H(+). It functions in the pathway cofactor biosynthesis; coenzyme A biosynthesis. In terms of biological role, catalyzes the GTP-dependent phosphorylation of the 3'-hydroxyl group of dephosphocoenzyme A to form coenzyme A (CoA). The sequence is that of GTP-dependent dephospho-CoA kinase from Methanocaldococcus jannaschii (strain ATCC 43067 / DSM 2661 / JAL-1 / JCM 10045 / NBRC 100440) (Methanococcus jannaschii).